Consider the following 428-residue polypeptide: Tol-Pal system protein TolB (428 aa).

A signal peptide spans 1–24 (MPSLKTLLRGVLVAAMLVAGSARA).

This sequence belongs to the TolB family. The Tol-Pal system is composed of five core proteins: the inner membrane proteins TolA, TolQ and TolR, the periplasmic protein TolB and the outer membrane protein Pal. They form a network linking the inner and outer membranes and the peptidoglycan layer.

The protein resides in the periplasm. Its function is as follows. Part of the Tol-Pal system, which plays a role in outer membrane invagination during cell division and is important for maintaining outer membrane integrity. The sequence is that of Tol-Pal system protein TolB from Chromobacterium violaceum (strain ATCC 12472 / DSM 30191 / JCM 1249 / CCUG 213 / NBRC 12614 / NCIMB 9131 / NCTC 9757 / MK).